A 72-amino-acid polypeptide reads, in one-letter code: Delta-actitoxin-Avd2b 1 (72 aa).

An N-terminal signal peptide occupies residues 1 to 21 (MMNRLLVFLMLGAAFMLVVSA). Residues 22–42 (NDAYGDEPAFKDLNQGDESLG) constitute a propeptide that is removed on maturation. Cystine bridges form between Cys-47-Cys-62, Cys-48-Cys-56, and Cys-50-Cys-67.

Belongs to the sea anemone short toxin (type III) family.

It localises to the secreted. The protein localises to the nematocyst. Voltage-gated sodium channel (Nav) inhibitor. 1 uM completely inhibits insect voltage-gated sodium channel inactivation (DmNav1 from D.melanogaster). This Anemonia viridis (Snakelocks anemone) protein is Delta-actitoxin-Avd2b 1.